A 272-amino-acid chain; its full sequence is Putative phosphoenolpyruvate synthase regulatory protein (272 aa).

An ADP-binding site is contributed by 152-159 (GVSRCGKT).

This sequence belongs to the pyruvate, phosphate/water dikinase regulatory protein family. PSRP subfamily.

It catalyses the reaction [pyruvate, water dikinase] + ADP = [pyruvate, water dikinase]-phosphate + AMP + H(+). It carries out the reaction [pyruvate, water dikinase]-phosphate + phosphate + H(+) = [pyruvate, water dikinase] + diphosphate. Its function is as follows. Bifunctional serine/threonine kinase and phosphorylase involved in the regulation of the phosphoenolpyruvate synthase (PEPS) by catalyzing its phosphorylation/dephosphorylation. This Pseudomonas savastanoi pv. phaseolicola (strain 1448A / Race 6) (Pseudomonas syringae pv. phaseolicola (strain 1448A / Race 6)) protein is Putative phosphoenolpyruvate synthase regulatory protein.